Here is a 632-residue protein sequence, read N- to C-terminus: Polyadenylate-binding protein, cytoplasmic and nuclear (632 aa).

Over residues 1–11 (MSAADANQLQE) the composition is skewed to polar residues. Residues 1–43 (MSAADANQLQESLEKLNLDSAPAAAEEEAVAAESAPAGEEGAD) form a disordered region. Residues 31-43 (AAESAPAGEEGAD) show a composition bias toward low complexity. 4 RRM domains span residues 52–130 (ASLY…WSQR), 140–217 (GNIF…KHIS), 233–310 (TNIY…RAQK), and 336–413 (VNLF…LAQR). Positions 534–615 (QQRDLAAIIA…ALTAFEEYKN (82 aa)) constitute a PABC domain.

It belongs to the polyadenylate-binding protein type-1 family.

It is found in the cytoplasm. The protein resides in the nucleus. In terms of biological role, binds the poly(A) tail of mRNA. Appears to be an important mediator of the multiple roles of the poly(A) tail in mRNA biogenesis, stability and translation. In the nucleus, involved in both mRNA cleavage and polyadenylation. Is also required for efficient mRNA export to the cytoplasm. Acts in concert with a poly(A)-specific nuclease (PAN) to affect poly(A) tail shortening, which may occur concomitantly with either nucleocytoplasmic mRNA transport or translational initiation. In the cytoplasm, stimulates translation initiation and regulates mRNA decay through translation termination-coupled poly(A) shortening, probably mediated by PAN. The chain is Polyadenylate-binding protein, cytoplasmic and nuclear (PAB1) from Scheffersomyces stipitis (strain ATCC 58785 / CBS 6054 / NBRC 10063 / NRRL Y-11545) (Yeast).